Reading from the N-terminus, the 299-residue chain is ATP phosphoribosyltransferase (299 aa).

The protein belongs to the ATP phosphoribosyltransferase family. Long subfamily. In terms of assembly, equilibrium between an active dimeric form, an inactive hexameric form and higher aggregates. Interconversion between the various forms is largely reversible and is influenced by the natural substrates and inhibitors of the enzyme. The cofactor is Mg(2+).

The protein resides in the cytoplasm. The enzyme catalyses 1-(5-phospho-beta-D-ribosyl)-ATP + diphosphate = 5-phospho-alpha-D-ribose 1-diphosphate + ATP. Its pathway is amino-acid biosynthesis; L-histidine biosynthesis; L-histidine from 5-phospho-alpha-D-ribose 1-diphosphate: step 1/9. Its activity is regulated as follows. Feedback inhibited by histidine. In terms of biological role, catalyzes the condensation of ATP and 5-phosphoribose 1-diphosphate to form N'-(5'-phosphoribosyl)-ATP (PR-ATP). Has a crucial role in the pathway because the rate of histidine biosynthesis seems to be controlled primarily by regulation of HisG enzymatic activity. The protein is ATP phosphoribosyltransferase of Buchnera aphidicola subsp. Melaphis rhois.